We begin with the raw amino-acid sequence, 1785 residues long: MATPDDPATPALSLSASNSSSPTAASSVPPPTGTSEIQYDDVAIIGMSCRTAGGNDSPEKLWRFIMDKKDASGESPSWRWEPWVRRDTRNAKVIEKTISKGYFIEDLENFDASFFGISPKEAEQMDPHQRLGLEVTWEALEDAGINPQSLSGSDTAVYVGVDSDDYSRLLLEDIPNIEAWMGIGTTAHGIPNRISYHLDLMGPSAAVDAACASSMVAVHTGRQAILAGESRIAIVGGVNVCLSPALFHMLGAAGALSPDGVCLSFDEEARGYARGEGAAILILKKMSHAIMDGDHILATIKGSAIAQDGKTNGIMAPNAKAQELVARKALKQAGINALTVGYIEAHATSTPLGDPTEVSAISAVYGVGRPTDTPALIGSIKPNVGHLEAAAGAISLVKAVMAVQKGIVPPQTRLNKLNTRVDWAKSGLHVVRESTQWGTEDSPRRAAICSYGYGGTVSHAIIEQFAHAADPFTASTSDDNHPTLLLLSAPQGKQRLPAQSAALAEWISPAGAHESLRSIAATLATRRAHHENRAAFIVSSHTEAAETLNLFSKGAEHDSIVQSRTLDNNINKQIVWVFSGHGSHWSGMGKQLLQNAVFYRTVAPLDIVVVQELGYSAIEALKTGRFESSGQVQVLTYMTQIGLIQLLKAKGVHPHAVIGHSVGEIAASVAAGCLTPEEGMIIVTRRARLFAKVIGCGGMFLVSLPFAEVLAELGGRTDIVAAIDSSPSSCVISGLNAPLEEYVEKLKNRGIRVFQVKTDIAFHSPMLEVLSKPLKESLEGSLNPQPPNIKLYSTSQADTRHPARRDAEYWVDNMVKPVWLRPAVTAAIEDHYRIFMEVSTHPIVSHSLDETLAENGASDFTTIHTMKKEQSAEKCILHAVAQLWTKGVKIDFKFLGRQWSREVPKIRWSHKRFWKEVSTGSASAQTVHDPDKNNMLGQRMVVAGTNMTIFTTALDESSKPFPMPHQLHGTDIIPVSVYVNTFIKATGGKVLSKMELRVPLAVTNDVRNVQVIVDGQSVKVASRLSSSDDMSWVTHSTASWENEPSANVLPSLDVSSVIKRIGTRVSETFSVDYLKKTGVSGMAFPWAVNDHYNNTKEMLVTLDNDPEHETMSWDPCSWGATLDAATSVGATLFSREVKLRIVSHIDRLTIYSSDPPPKRYHLYVTEASSSQVHACSADISVLDLSGTLLARIESIRFTEVEATPTKSTSIESGVHQIAWVPARLSEKPLSLEQIVLVSEDDAKLEQYANELQRQAPKIVKLTSAAKLRDNGALFMREKNATVIYCPGTVTSLEDVASASHRFIWEVATAIKFLVENSISAKFFVILDRTFLAGSPTALAQGALYGLARVVASEHSDIWGGLIDNEGPLFPVMPLKYVQDQDITRYIDGVPRVARMRPFTKQQRYAPSTARTLLPKPEGTYVLTGGLGALGLETCDFLIEKGARRIVVISRRDIPARSQWSKASENLAPILERVKAMEKTGASIYFVSLDIGAADAHQQLLFALERLSLPPVLGVIHASGVLEDSLLVDTTSDSFARVLSPKISGALALHKAFPPGTLDFFVLYSSIGQLVGTSGQSSYAAGNSFLDVLAAHRRSQGDNAIAFQWTAWRGLGMATSTDFLTLELQSKGITDVGRDEAFQAWEHMSKYDVDQAVVTRTLALEADDILPCALLEEVVVRKARAQDQSAPASGNASDSSGRPTASADLKPWLDVKIRECVALVMGVEDIEEIDTRVPLSDYGVDSIMTIALRQKLQSKLKIKVPQTLMWNYPTVSAMVGWFQKQFEEGQ.

Positions 1 to 36 (MATPDDPATPALSLSASNSSSPTAASSVPPPTGTSE) are disordered. The span at 8–27 (ATPALSLSASNSSSPTAASS) shows a compositional bias: low complexity. Positions 39–464 (YDDVAIIGMS…GTVSHAIIEQ (426 aa)) constitute a Ketosynthase family 3 (KS3) domain. Active-site for beta-ketoacyl synthase activity residues include Cys211, His346, and His386. The tract at residues 575-888 (VWVFSGHGSH…AVAQLWTKGV (314 aa)) is malonyl-CoA:ACP transacylase (MAT) domain. Ser661 acts as the For malonyltransferase activity in catalysis. Residues 933–1047 (NNMLGQRMVV…ASWENEPSAN (115 aa)) form an N-terminal hotdog fold region. The region spanning 933 to 1206 (NNMLGQRMVV…FTEVEATPTK (274 aa)) is the PKS/mFAS DH domain. Residues 935–1203 (MLGQRMVVAG…SIRFTEVEAT (269 aa)) form a dehydratase (DH) domain region. Residue His965 is the Proton acceptor; for dehydratase activity of the active site. The segment at 1062–1206 (GTRVSETFSV…FTEVEATPTK (145 aa)) is C-terminal hotdog fold. The Proton donor; for dehydratase activity role is filled by Asp1123. A ketoreductase (KR) domain region spans residues 1418–1608 (GTYVLTGGLG…AIAFQWTAWR (191 aa)). Residues 1681–1698 (QDQSAPASGNASDSSGRP) show a composition bias toward polar residues. The interval 1681 to 1701 (QDQSAPASGNASDSSGRPTAS) is disordered. The Carrier domain maps to 1706–1781 (PWLDVKIREC…AMVGWFQKQF (76 aa)). An O-(pantetheine 4'-phosphoryl)serine modification is found at Ser1741.

Its pathway is secondary metabolite biosynthesis. Its function is as follows. Polyketide synthase that produces (R)-mellein, a secondary metabolite that inhibits the germination of wheat (Triticum aestivum) and barrel medic (Medicago truncatula) seeds. Condensates 1 acetate starter unit and 4 extender malonate units. The nascent pentaketide intermediate then undergoes an aldol cyclization and is aromatized via dehydration. The (R)-O-methylmellein isolated from P.nodorum is most likely to be derived from (R)-mellein via an additional methylation at the hydroxyl group. Interestingly, no O-methyltransferase gene is encoded in the vicinity of MLNS on the chromosome. Thus, the O-methylation is likely to be catalyzed by an endogenous O-methyltransferase encoded elsewhere in the genome of P.nodorum. The polypeptide is Mellein synthase (Phaeosphaeria nodorum (strain SN15 / ATCC MYA-4574 / FGSC 10173) (Glume blotch fungus)).